The primary structure comprises 465 residues: MNELTPQEIVRELDKYIVGQERAKRCVAIALRNRYRRAKLPKELQDEITPKNILMVGPTGVGKTEIARRLAKLVNAPFVKVEATKFTEVGYVGRDVDSMVRDLVENAISLVKSEYMEKMKERAKALVEDRILEILIPEPHARKAGFKNPFEALFGAPSQEPEQTYQTTDDYIRTQREILREKLRSGELEDKVIEVEVEDTVKPPFEMIMGTISDEMGISFQDVFGSLFPKKKKKKKMTIREAREVLEQEEYNKLIDMDEVIKEAIHRAEQHGIIFIDEIDKIAGRGSGVGPDVSREGVQRDILPIVEGSTVMTKYGPVKTDHILFIAAGAFHVAKVSDLIPELQGRFPVVVELHPLTEEDFKKILTQPKNAITKQYIELMKTEGVNITFTDDAIEAIAKVAVKINEQSENIGARRLHTVVEKIMEDISFEYANVEKPIDVVIDKDYVYSKVSDMIKDKDLNRFII.

ATP contacts are provided by residues V18, 60–65, D277, E342, and R414; that span reads GVGKTE.

Belongs to the ClpX chaperone family. HslU subfamily. In terms of assembly, a double ring-shaped homohexamer of HslV is capped on each side by a ring-shaped HslU homohexamer. The assembly of the HslU/HslV complex is dependent on binding of ATP.

Its subcellular location is the cytoplasm. In terms of biological role, ATPase subunit of a proteasome-like degradation complex; this subunit has chaperone activity. The binding of ATP and its subsequent hydrolysis by HslU are essential for unfolding of protein substrates subsequently hydrolyzed by HslV. HslU recognizes the N-terminal part of its protein substrates and unfolds these before they are guided to HslV for hydrolysis. The chain is ATP-dependent protease ATPase subunit HslU from Caldicellulosiruptor saccharolyticus (strain ATCC 43494 / DSM 8903 / Tp8T 6331).